A 344-amino-acid polypeptide reads, in one-letter code: Aurora kinase B (344 aa).

Thr35 is modified (phosphothreonine). The disordered stretch occupies residues 46–65; the sequence is NAQPTAAPGQKVVENSSGTP. Phosphoserine is present on Ser62. The residue at position 64 (Thr64) is a Phosphothreonine. The Protein kinase domain maps to 77-327; the sequence is FEIGRPLGKG…LAQVSAHPWV (251 aa). ATP is bound by residues 83 to 91 and Lys106; that span reads LGKGKFGNV. Asp200 serves as the catalytic Proton acceptor. N6-acetyllysine is present on Lys215. Residue Ser227 is modified to Phosphoserine. Thr232 is subject to Phosphothreonine; by autocatalysis.

The protein belongs to the protein kinase superfamily. Ser/Thr protein kinase family. Aurora subfamily. Component of the chromosomal passenger complex (CPC) composed of at least BIRC5/survivin, CDCA8/borealin, INCENP, AURKB or AURKC; predominantly independent AURKB- and AURKC-containing complexes exist. Associates with RACGAP1 during M phase. Interacts with SPDYC; this interaction may be required for proper localization of active, Thr-232-phosphorylated AURKB form during prometaphase and metaphase. Interacts with p53/TP53. Interacts (via the middle kinase domain) with NOC2L (via the N- and C-terminus domains). Interacts with CDCA1. Interacts with EVI5. Interacts with JTB. Interacts with NDC80. Interacts with PSMA3. Interacts with RNF2/RING1B. Interacts with SEPTIN1. Interacts with SIRT2. Interacts with TACC1. Interacts with TTC28. Post-translationally, the phosphorylation of Thr-232 requires the binding to INCENP and occurs by means of an autophosphorylation mechanism. Thr-232 phosphorylation is indispensable for the AURKB kinase activity. Acetylated at Lys-215 by KAT5 at kinetochores, increasing AURKB activity and promoting accurate chromosome segregation in mitosis. In terms of processing, ubiquitinated by different BCR (BTB-CUL3-RBX1) E3 ubiquitin ligase complexes. Ubiquitinated by the BCR(KLHL9-KLHL13) E3 ubiquitin ligase complex, ubiquitination leads to removal from mitotic chromosomes and is required for cytokinesis. During anaphase, the BCR(KLHL21) E3 ubiquitin ligase complex recruits the CPC complex from chromosomes to the spindle midzone and mediates the ubiquitination of AURKB. Ubiquitination of AURKB by BCR(KLHL21) E3 ubiquitin ligase complex may not lead to its degradation by the proteasome. Deubiquitinated by USP35; inhibiting CDH1-mediated degradation of AURKB.

It localises to the nucleus. It is found in the chromosome. Its subcellular location is the centromere. The protein localises to the kinetochore. The protein resides in the cytoplasm. It localises to the cytoskeleton. It is found in the spindle. Its subcellular location is the midbody. The enzyme catalyses L-seryl-[protein] + ATP = O-phospho-L-seryl-[protein] + ADP + H(+). The catalysed reaction is L-threonyl-[protein] + ATP = O-phospho-L-threonyl-[protein] + ADP + H(+). Activity is greatly increased when AURKB is within the CPC complex. In particular, AURKB-phosphorylated INCENP acts as an activator of AURKB. Positive feedback between HASPIN and AURKB contributes to CPC localization. In terms of biological role, serine/threonine-protein kinase component of the chromosomal passenger complex (CPC), a complex that acts as a key regulator of mitosis. The CPC complex has essential functions at the centromere in ensuring correct chromosome alignment and segregation and is required for chromatin-induced microtubule stabilization and spindle assembly. Involved in the bipolar attachment of spindle microtubules to kinetochores and is a key regulator for the onset of cytokinesis during mitosis. Required for central/midzone spindle assembly and cleavage furrow formation. Key component of the cytokinesis checkpoint, a process required to delay abscission to prevent both premature resolution of intercellular chromosome bridges and accumulation of DNA damage: phosphorylates CHMP4C, leading to retain abscission-competent VPS4 (VPS4A and/or VPS4B) at the midbody ring until abscission checkpoint signaling is terminated at late cytokinesis. AURKB phosphorylates the CPC complex subunits BIRC5/survivin, CDCA8/borealin and INCENP. Phosphorylation of INCENP leads to increased AURKB activity. Other known AURKB substrates involved in centromeric functions and mitosis are CENPA, DES/desmin, GPAF, KIF2C, NSUN2, RACGAP1, SEPTIN1, VIM/vimentin, HASPIN, and histone H3. A positive feedback loop involving HASPIN and AURKB contributes to localization of CPC to centromeres. Phosphorylation of VIM controls vimentin filament segregation in cytokinetic process, whereas histone H3 is phosphorylated at 'Ser-10' and 'Ser-28' during mitosis (H3S10ph and H3S28ph, respectively). AURKB is also required for kinetochore localization of BUB1 and SGO1. Phosphorylation of p53/TP53 negatively regulates its transcriptional activity. Key regulator of active promoters in resting B- and T-lymphocytes: acts by mediating phosphorylation of H3S28ph at active promoters in resting B-cells, inhibiting RNF2/RING1B-mediated ubiquitination of histone H2A and enhancing binding and activity of the USP16 deubiquitinase at transcribed genes. Acts as an inhibitor of CGAS during mitosis: catalyzes phosphorylation of the N-terminus of CGAS during the G2-M transition, blocking CGAS liquid phase separation and activation, and thereby preventing CGAS-induced autoimmunity. Phosphorylates KRT5 during anaphase and telophase. Phosphorylates ATXN10 which promotes phosphorylation of ATXN10 by PLK1 and may play a role in the regulation of cytokinesis and stimulating the proteasomal degradation of ATXN10. The chain is Aurora kinase B (AURKB) from Bos taurus (Bovine).